Here is a 458-residue protein sequence, read N- to C-terminus: KAT8 regulatory NSL complex subunit 2 (458 aa).

K78 is covalently cross-linked (Glycyl lysine isopeptide (Lys-Gly) (interchain with G-Cter in SUMO2)). Residues 126–182 (ELGSQTPESSRSEASRILDEDSWSDGDQEPITVDQTWRGDPDSEADSIDSDQEDPLK) form a disordered region. T131 carries the post-translational modification Phosphothreonine. A compositionally biased stretch (basic and acidic residues) spans 135 to 144 (SRSEASRILD). S147, S149, S168, S172, and S175 each carry phosphoserine. Residues 167-178 (DSEADSIDSDQE) show a composition bias toward acidic residues. Residues 308-364 (DVRCSNQSLPMTRHCLTHICQDTNQVLFKCCQGSEEVPCNKPVPVSLSEDPCCPLHF) are required for interaction with other NSL complex members. A disordered region spans residues 419 to 458 (QMAGDGCRSQGPRNSEKAPAPLPQSGIATANGKPEPTSVS).

In terms of assembly, component of the NSL complex at least composed of KAT8/MOF, KANSL1, KANSL2, KANSL3, MCRS1, PHF20, OGT1/OGT, WDR5 and HCFC1.

It localises to the nucleus. The protein localises to the mitochondrion. In terms of biological role, non-catalytic component of the NSL histone acetyltransferase complex, a multiprotein complex that mediates histone H4 acetylation at 'Lys-5'- and 'Lys-8' (H4K5ac and H4K8ac) at transcription start sites and promotes transcription initiation. Required for NSL complex stability and for transcription of intraciliary transport genes in both ciliated and non-ciliated cells by regulating histone H4 acetylation at 'Lys-5'- and 'Lys-12' (H4K5ac and H4K12ac). This is necessary for cilium assembly in ciliated cells and for organization of the microtubule cytoskeleton in non-ciliated cells. Required within the NSL complex to maintain nuclear architecture stability by promoting KAT8-mediated acetylation of lamin LMNA. In Bos taurus (Bovine), this protein is KAT8 regulatory NSL complex subunit 2 (KANSL2).